A 224-amino-acid polypeptide reads, in one-letter code: Germin-like protein 8-9 (224 aa).

The first 22 residues, 1 to 22, serve as a signal peptide directing secretion; sequence MASPSFCLFAALLALVSWQAIA. An intrachain disulfide couples Cys32 to Cys47. One can recognise a Cupin type-1 domain in the interval 62–212; the sequence is AMLDTPRKTN…AFQVGKGTID (151 aa). Residue Asn76 is glycosylated (N-linked (GlcNAc...) asparagine). His109, His111, and Glu116 together coordinate Mn(2+). The N-linked (GlcNAc...) asparagine glycan is linked to Asn135. His157 contacts Mn(2+).

Belongs to the germin family. Oligomer (believed to be a pentamer but probably hexamer).

The protein localises to the secreted. The protein resides in the extracellular space. It localises to the apoplast. Functionally, plays a role in broad-spectrum disease resistance. Probably has no oxalate oxidase activity even if the active site is conserved. The polypeptide is Germin-like protein 8-9 (Oryza sativa subsp. japonica (Rice)).